The sequence spans 247 residues: MDARQLHFHLGGCNFLRSALLRHATIQVLGGRRWFQLVQSGLLGMVVGVDNDQGAVFRAGDWWVKDNTNAAKNSMEKNWDPDVDDFGVVDNTNAVNQILRNYEAVFYSGHGNKEGGGYGKGECIVVKGTGKHPELWYCYHHAVYGLRTRLFVIQACYAANENPNSLANVLARKGVECVIGASGSIHDYDAFGLPTCRTWADVFWDHVTGNSDANYQKRTAHEARIEANSAAWFCDLDREVGNCNMYI.

This is an uncharacterized protein from Archaeoglobus fulgidus (strain ATCC 49558 / DSM 4304 / JCM 9628 / NBRC 100126 / VC-16).